Here is an 84-residue protein sequence, read N- to C-terminus: Omega-conotoxin-like ArMKLT1-02 (84 aa).

An N-terminal signal peptide occupies residues 1 to 22 (MKVTCMMIVAVLFLTAWTFVTA). Residues 23–51 (DDSISALEDLFAKAHDKMENSEASPLNER) constitute a propeptide that is removed on maturation. Cystine bridges form between Cys53–Cys71, Cys60–Cys75, and Cys70–Cys79.

The protein belongs to the conotoxin O1 superfamily. As to expression, expressed by the venom duct.

It is found in the secreted. In terms of biological role, omega-conotoxins act at presynaptic membranes, they bind and block voltage-gated calcium channels (Cav). The sequence is that of Omega-conotoxin-like ArMKLT1-02 from Conus arenatus (Sand-dusted cone).